The sequence spans 727 residues: Polyribonucleotide nucleotidyltransferase (727 aa).

Mg(2+)-binding residues include Asp491 and Asp497. A KH domain is found at Pro558–Ile617. The region spanning Gly627–Lys701 is the S1 motif domain. Positions Leu698–Ser727 are disordered. Positions Gly717 to Ser727 are enriched in polar residues.

It belongs to the polyribonucleotide nucleotidyltransferase family. Requires Mg(2+) as cofactor.

It is found in the cytoplasm. It catalyses the reaction RNA(n+1) + phosphate = RNA(n) + a ribonucleoside 5'-diphosphate. Functionally, involved in mRNA degradation. Catalyzes the phosphorolysis of single-stranded polyribonucleotides processively in the 3'- to 5'-direction. This Desulfitobacterium hafniense (strain Y51) protein is Polyribonucleotide nucleotidyltransferase.